Reading from the N-terminus, the 129-residue chain is RxLR effector protein PexRD43 (129 aa).

A signal peptide spans Met1–Gly16. Positions Arg44–Arg56 match the RxLR-dEER motif.

Belongs to the RxLR effector family.

Its subcellular location is the secreted. It is found in the host cytoplasm. The protein localises to the host nucleus. Its function is as follows. Effector that enhances P.infestans colonization of Nicotiana benthamiana leaves. The protein is RxLR effector protein PexRD43 of Phytophthora infestans (strain T30-4) (Potato late blight agent).